The chain runs to 260 residues: Exosome complex component Rrp42 (260 aa).

It belongs to the RNase PH family. Rrp42 subfamily. As to quaternary structure, component of the archaeal exosome complex. Forms a hexameric ring-like arrangement composed of 3 Rrp41-Rrp42 heterodimers. The hexameric ring associates with a trimer of Rrp4 and/or Csl4 subunits.

The protein resides in the cytoplasm. In terms of biological role, non-catalytic component of the exosome, which is a complex involved in RNA degradation. Contributes to the structuring of the Rrp41 active site. The sequence is that of Exosome complex component Rrp42 from Methanocella arvoryzae (strain DSM 22066 / NBRC 105507 / MRE50).